The primary structure comprises 284 residues: Serine/arginine-rich splicing factor RS2Z32 (284 aa).

An RRM domain is found at 11 to 81 (TRLYVGRLSS…SRITVEASRG (71 aa)). The interval 74–97 (ITVEASRGAPRGSRDNGSRGPPPG) is disordered. CCHC-type zinc fingers lie at residues 99-116 (GRCF…DCTA) and 121-138 (NKCY…NCKN). The tract at residues 132–284 (IERNCKNSPS…RPSPKGSESP (153 aa)) is disordered. Residues 159 to 180 (RSPRRRRSPSRSRSYSRGRSYS) are compositionally biased toward basic residues. Ser166, Ser168, and Ser184 each carry phosphoserine. Positions 186 to 203 (VRREKSVEDRSRSPKAME) are enriched in basic and acidic residues. Phosphoserine is present on residues Ser205, Ser207, Ser214, Ser216, Ser225, Ser235, Ser255, Ser265, Ser277, and Ser281. The segment covering 209–236 (KGRDQSLSPDRKVIDASPKRGSDYDGSP) has biased composition (basic and acidic residues).

Belongs to the splicing factor SR family. RS2Z subfamily. In terms of assembly, component of the spliceosome. Post-translationally, extensively phosphorylated on serine residues in the RS domain.

It is found in the nucleus. In terms of biological role, probably involved in intron recognition and spliceosome assembly. In Arabidopsis thaliana (Mouse-ear cress), this protein is Serine/arginine-rich splicing factor RS2Z32 (RS2Z32).